The chain runs to 227 residues: RNA pyrophosphohydrolase (227 aa).

The Nudix hydrolase domain occupies 6–149 (GFRPNVGIIL…KRDVYQMALT (144 aa)). The Nudix box signature appears at 38–59 (GGIKYGETPEQAMYRELHEEIG). The interval 165-227 (PYGTHGAHGA…PVSTTRSTDD (63 aa)) is disordered. A compositionally biased stretch (low complexity) spans 192 to 201 (AQAAQQADAD). Positions 217 to 227 (TPVSTTRSTDD) are enriched in polar residues.

Belongs to the Nudix hydrolase family. RppH subfamily. Requires a divalent metal cation as cofactor.

Functionally, accelerates the degradation of transcripts by removing pyrophosphate from the 5'-end of triphosphorylated RNA, leading to a more labile monophosphorylated state that can stimulate subsequent ribonuclease cleavage. The polypeptide is RNA pyrophosphohydrolase (Cupriavidus taiwanensis (strain DSM 17343 / BCRC 17206 / CCUG 44338 / CIP 107171 / LMG 19424 / R1) (Ralstonia taiwanensis (strain LMG 19424))).